The sequence spans 433 residues: NADH-quinone oxidoreductase subunit D (433 aa).

The protein belongs to the complex I 49 kDa subunit family. NDH-1 is composed of 14 different subunits. Subunits NuoB, C, D, E, F, and G constitute the peripheral sector of the complex.

The protein resides in the cell membrane. The enzyme catalyses a quinone + NADH + 5 H(+)(in) = a quinol + NAD(+) + 4 H(+)(out). NDH-1 shuttles electrons from NADH, via FMN and iron-sulfur (Fe-S) centers, to quinones in the respiratory chain. The immediate electron acceptor for the enzyme in this species is believed to be a menaquinone. Couples the redox reaction to proton translocation (for every two electrons transferred, four hydrogen ions are translocated across the cytoplasmic membrane), and thus conserves the redox energy in a proton gradient. This chain is NADH-quinone oxidoreductase subunit D, found in Cutibacterium acnes (strain DSM 16379 / KPA171202) (Propionibacterium acnes).